The primary structure comprises 435 residues: ATP-dependent protease ATPase subunit HslU (435 aa).

Residues valine 18, 60–65 (GVGKTE), aspartate 248, glutamate 313, and arginine 385 each bind ATP.

This sequence belongs to the ClpX chaperone family. HslU subfamily. As to quaternary structure, a double ring-shaped homohexamer of HslV is capped on each side by a ring-shaped HslU homohexamer. The assembly of the HslU/HslV complex is dependent on binding of ATP.

It is found in the cytoplasm. In terms of biological role, ATPase subunit of a proteasome-like degradation complex; this subunit has chaperone activity. The binding of ATP and its subsequent hydrolysis by HslU are essential for unfolding of protein substrates subsequently hydrolyzed by HslV. HslU recognizes the N-terminal part of its protein substrates and unfolds these before they are guided to HslV for hydrolysis. The chain is ATP-dependent protease ATPase subunit HslU from Azorhizobium caulinodans (strain ATCC 43989 / DSM 5975 / JCM 20966 / LMG 6465 / NBRC 14845 / NCIMB 13405 / ORS 571).